Here is a 289-residue protein sequence, read N- to C-terminus: UDP-3-O-acyl-N-acetylglucosamine deacetylase (289 aa).

Zn(2+)-binding residues include H79, H236, and D240. Residue H263 is the Proton donor of the active site.

Belongs to the LpxC family. Requires Zn(2+) as cofactor.

It carries out the reaction a UDP-3-O-[(3R)-3-hydroxyacyl]-N-acetyl-alpha-D-glucosamine + H2O = a UDP-3-O-[(3R)-3-hydroxyacyl]-alpha-D-glucosamine + acetate. The protein operates within glycolipid biosynthesis; lipid IV(A) biosynthesis; lipid IV(A) from (3R)-3-hydroxytetradecanoyl-[acyl-carrier-protein] and UDP-N-acetyl-alpha-D-glucosamine: step 2/6. Its function is as follows. Catalyzes the hydrolysis of UDP-3-O-myristoyl-N-acetylglucosamine to form UDP-3-O-myristoylglucosamine and acetate, the committed step in lipid A biosynthesis. The chain is UDP-3-O-acyl-N-acetylglucosamine deacetylase from Rickettsia typhi (strain ATCC VR-144 / Wilmington).